The chain runs to 383 residues: WAT1-related protein At3g18200 (383 aa).

Residues 1–16 are compositionally biased toward basic residues; sequence MCYQTSKKKRRSRKRR. The interval 1-23 is disordered; it reads MCYQTSKKKRRSRKRRAQEEKEK. 10 helical membrane-spanning segments follow: residues 33-53, 65-85, 91-111, 126-146, 158-178, 204-224, 237-257, 272-292, 300-320, and 325-345; these read VKLV…HIVS, VYPV…AYFF, PPLT…GITA, TFAS…ACAL, GVAK…ITLY, LTLG…WMVL, TLTS…ALFV, LFTI…LQTW, VFVA…AFLI, and LYSG…LVLW. EamA domains lie at 44 to 173 and 216 to 344; these read FCFA…GGAT and LSWA…YLVL.

The protein belongs to the drug/metabolite transporter (DMT) superfamily. Plant drug/metabolite exporter (P-DME) (TC 2.A.7.4) family.

It localises to the membrane. In Arabidopsis thaliana (Mouse-ear cress), this protein is WAT1-related protein At3g18200.